Here is a 358-residue protein sequence, read N- to C-terminus: Vascular endothelial growth factor D (358 aa).

The first 21 residues, methionine 1–glycine 21, serve as a signal peptide directing secretion. Residues phenylalanine 22–arginine 93 constitute a propeptide that is removed on maturation. Intrachain disulfides connect cysteine 116/cysteine 158, cysteine 147/cysteine 194, and cysteine 151/cysteine 196. Asparagine 160 and asparagine 190 each carry an N-linked (GlcNAc...) asparagine glycan. The propeptide occupies serine 211–proline 358. A 1; approximate repeat occupies cysteine 227–leucine 242. A 4 X 16 AA repeats of C-X(10)-C-X-C-X(1,3)-C region spans residues cysteine 227–cysteine 323. A run of 3 repeats spans residues cysteine 263–cysteine 278, cysteine 282–cysteine 298, and cysteine 306–cysteine 323. Asparagine 292 carries N-linked (GlcNAc...) asparagine glycosylation.

This sequence belongs to the PDGF/VEGF growth factor family. In terms of assembly, homodimer; non-covalent and antiparallel. Post-translationally, undergoes a complex proteolytic maturation which generates a variety of processed secreted forms with increased activity toward VEGFR-3 and VEGFR-2. VEGF-D first form an antiparallel homodimer linked by disulfide bonds before secretion. The fully processed VEGF-D is composed mostly of two VEGF homology domains (VHDs) bound by non-covalent interactions. Highly expressed in fetal and adult lung.

It localises to the secreted. Its function is as follows. Growth factor active in angiogenesis, lymphangiogenesis and endothelial cell growth, stimulating their proliferation and migration and also has effects on the permeability of blood vessels. May function in the formation of the venous and lymphatic vascular systems during embryogenesis, and also in the maintenance of differentiated lymphatic endothelium in adults. Binds and activates VEGFR-3 (Flt4) receptor. This is Vascular endothelial growth factor D from Mus musculus (Mouse).